A 40-amino-acid chain; its full sequence is Large ribosomal subunit protein bL36A (40 aa).

This sequence belongs to the bacterial ribosomal protein bL36 family.

In Paenarthrobacter aurescens (strain TC1), this protein is Large ribosomal subunit protein bL36A.